A 423-amino-acid chain; its full sequence is Progestin and adipoQ receptor-like protein 1 (423 aa).

Topologically, residues 1–201 (MDPDEVNQAL…KSIWSLHTET (201 aa)) are cytoplasmic. The tract at residues 54 to 140 (VVSPTNSDDE…DEDELEVDVK (87 aa)) is disordered. The segment covering 60–69 (SDDEEGEFCS) has biased composition (acidic residues). Residues 104-114 (TVLRYRRKKGG) show a composition bias toward basic residues. A helical transmembrane segment spans residues 202–222 (GNIWTHLIGCVAFFLLACWFL). Over 223–234 (TRPDNHIQFQEK) the chain is Extracellular. The chain crosses the membrane as a helical span at residues 235 to 252 (VVFSFFFAGAVSVSDSRS). Topologically, residues 253–288 (PSTPSRVIRSTSSRYSANSTIWESRCSLSARLFQPK) are cytoplasmic. A helical transmembrane segment spans residues 289 to 309 (ITYIAMVCVLGIGAIVVSLWD). The Extracellular portion of the chain corresponds to 310–320 (KFSESKYRPVR). A helical membrane pass occupies residues 321 to 341 (AAVFVGMGCSGVIPTIHYIIT). The Cytoplasmic portion of the chain corresponds to 342–351 (DGVHSLFADN). Residues 352–372 (SFHWLLLMAFLYLLGAALYAT) form a helical membrane-spanning segment. Residues 373–392 (RTPERFFPGKCDIWFQSHQL) are Extracellular-facing. A helical transmembrane segment spans residues 393 to 413 (FHTCVVIAAFVHYYGISEMAF). The Cytoplasmic portion of the chain corresponds to 414–423 (ARLNEQCPVR).

It belongs to the ADIPOR family.

Its subcellular location is the membrane. Probable receptor, which may be involved in metabolic pathways that regulate lipid metabolism such as fatty acid oxidation. The polypeptide is Progestin and adipoQ receptor-like protein 1 (Caenorhabditis briggsae).